Consider the following 306-residue polypeptide: Pantothenate kinase (306 aa).

Glycine 91–serine 98 provides a ligand contact to ATP.

It belongs to the prokaryotic pantothenate kinase family.

It is found in the cytoplasm. The catalysed reaction is (R)-pantothenate + ATP = (R)-4'-phosphopantothenate + ADP + H(+). Its pathway is cofactor biosynthesis; coenzyme A biosynthesis; CoA from (R)-pantothenate: step 1/5. The sequence is that of Pantothenate kinase from Streptococcus pyogenes serotype M5 (strain Manfredo).